The following is a 235-amino-acid chain: Myc target protein 1 (235 aa).

The Bipartite nuclear localization signal motif lies at 95–113; sequence RRRRASAPISQWSSSRRSR. 4 positions are modified to phosphoserine: S135, S138, S141, and S149.

This sequence belongs to the MYCT1 family. As to expression, down-regulated in gastric cancer tissues.

The protein resides in the nucleus. May regulate certain MYC target genes, MYC seems to be a direct upstream transcriptional activator. Does not seem to significantly affect growth cell capacity. Overexpression seems to mediate many of the known phenotypic features associated with MYC, including promotion of apoptosis, alteration of morphology, enhancement of anchorage-independent growth, tumorigenic conversion, promotion of genomic instability, and inhibition of hematopoietic differentiation. In Homo sapiens (Human), this protein is Myc target protein 1 (MYCT1).